The chain runs to 276 residues: Dermonecrotic toxin LafSicTox-betaIE2 (276 aa).

Residue H5 is part of the active site. 2 residues coordinate Mg(2+): E25 and D27. The active-site Nucleophile is H41. 2 disulfide bridges follow: C45-C51 and C47-C189. Residue D85 coordinates Mg(2+).

Belongs to the arthropod phospholipase D family. Class II subfamily. Mg(2+) is required as a cofactor. As to expression, expressed by the venom gland.

The protein localises to the secreted. It carries out the reaction an N-(acyl)-sphingosylphosphocholine = an N-(acyl)-sphingosyl-1,3-cyclic phosphate + choline. The catalysed reaction is an N-(acyl)-sphingosylphosphoethanolamine = an N-(acyl)-sphingosyl-1,3-cyclic phosphate + ethanolamine. The enzyme catalyses a 1-acyl-sn-glycero-3-phosphocholine = a 1-acyl-sn-glycero-2,3-cyclic phosphate + choline. It catalyses the reaction a 1-acyl-sn-glycero-3-phosphoethanolamine = a 1-acyl-sn-glycero-2,3-cyclic phosphate + ethanolamine. In terms of biological role, dermonecrotic toxins cleave the phosphodiester linkage between the phosphate and headgroup of certain phospholipids (sphingolipid and lysolipid substrates), forming an alcohol (often choline) and a cyclic phosphate. This toxin acts on sphingomyelin (SM). It may also act on ceramide phosphoethanolamine (CPE), lysophosphatidylcholine (LPC) and lysophosphatidylethanolamine (LPE), but not on lysophosphatidylserine (LPS), and lysophosphatidylglycerol (LPG). It acts by transphosphatidylation, releasing exclusively cyclic phosphate products as second products. Induces dermonecrosis, hemolysis, increased vascular permeability, edema, inflammatory response, and platelet aggregation. This chain is Dermonecrotic toxin LafSicTox-betaIE2, found in Loxosceles aff. spinulosa (strain GJB-2008) (Recluse spider).